We begin with the raw amino-acid sequence, 822 residues long: SKI/DACH domain-containing protein 1 (822 aa).

A compositionally biased stretch (basic residues) spans 245 to 261; the sequence is HHHHHHHHHHHHHHHRA. Residues 245 to 370 form a disordered region; the sequence is HHHHHHHHHH…SSSGSSQVSV (126 aa). Positions 278-318 are enriched in low complexity; the sequence is PHLGSFPESCSSDSESSSYSDHAANDSDFGSSLSSSSNSVS. The span at 319 to 338 shows a compositional bias: acidic residues; the sequence is SEEEEEEGEEEEEEEEEEEG. A Glycyl lysine isopeptide (Lys-Gly) (interchain with G-Cter in SUMO2) cross-link involves residue Lys602. Disordered regions lie at residues 658-677 and 706-732; these read ETPSLNPLAQSQGLSCTLGS and LQTPPVKPNLKSARSPRPTGKTETHEG. Over residues 660–675 the composition is skewed to polar residues; it reads PSLNPLAQSQGLSCTL.

This sequence belongs to the DACH/dachshund family.

The chain is SKI/DACH domain-containing protein 1 (Skida1) from Mus musculus (Mouse).